Consider the following 137-residue polypeptide: Large ribosomal subunit protein uL16 (137 aa).

The protein belongs to the universal ribosomal protein uL16 family. In terms of assembly, part of the 50S ribosomal subunit.

In terms of biological role, binds 23S rRNA and is also seen to make contacts with the A and possibly P site tRNAs. The chain is Large ribosomal subunit protein uL16 from Pseudomonas fluorescens (strain Pf0-1).